We begin with the raw amino-acid sequence, 65 residues long: Defensin Cg-Defm (65 aa).

A signal peptide spans 1 to 22; that stretch reads MKVFVLLTLAVLLMVSADMAFA. Phe-24, Gly-25, and Cys-26 together coordinate beta-D-GlcNAc-(1-&gt;4)-Mur2Ac(oyl-L-Ala-gamma-D-Glu-L-Lys-D-Ala-D-Ala)-di-trans,octa-cis-undecaprenyl diphosphate. 4 cysteine pairs are disulfide-bonded: Cys-26–Cys-47, Cys-33–Cys-56, Cys-37–Cys-58, and Cys-42–Cys-61. A binds to membrane interface region spans residues 27-30; it reads PGNQ. Residue His-36 participates in beta-D-GlcNAc-(1-&gt;4)-Mur2Ac(oyl-L-Ala-gamma-D-Glu-L-Lys-D-Ala-D-Ala)-di-trans,octa-cis-undecaprenyl diphosphate binding. The tract at residues 48–54 is binds to membrane interface; that stretch reads DAATLWL. Beta-D-GlcNAc-(1-&gt;4)-Mur2Ac(oyl-L-Ala-gamma-D-Glu-L-Lys-D-Ala-D-Ala)-di-trans,octa-cis-undecaprenyl diphosphate is bound at residue Cys-56.

This sequence belongs to the invertebrate defensin family. In terms of tissue distribution, expressed in the mantle. Low or no expression in most of the organs analyzed, including hemocytes, heart, digestive gland, and gills.

The protein resides in the secreted. Its subcellular location is the target cell membrane. Antibacterial peptide mostly active against Gram-positive bacteria (M.lysodeikticus, S.aureus, and the marine bacteria, B.stationis, and M.maritypicum). It acts by selectively inhibiting peptidoglycan biosynthesis through complex formation with the cell wall precursor lipid II (1:1 molar ratio) thus inhibiting cell wall synthesis. It does not disrupt cell membranes. Is noticeably more potent than Cg-Defh1. It shows no or limited activities against Gram-negative bacteria and filamentous fungi. In Magallana gigas (Pacific oyster), this protein is Defensin Cg-Defm.